The sequence spans 103 residues: MFVKTGDKVKVISGKDKGKEGTIIKAMPKEGRVVVEGINTIKKHVKPNAQNPNGGIVDTEASIDASNVMLIDPSNNEATRVGYKVVDGKKVRVSKKTGESIDK.

This sequence belongs to the universal ribosomal protein uL24 family. Part of the 50S ribosomal subunit.

In terms of biological role, one of two assembly initiator proteins, it binds directly to the 5'-end of the 23S rRNA, where it nucleates assembly of the 50S subunit. Functionally, one of the proteins that surrounds the polypeptide exit tunnel on the outside of the subunit. This Latilactobacillus sakei subsp. sakei (strain 23K) (Lactobacillus sakei subsp. sakei) protein is Large ribosomal subunit protein uL24.